The primary structure comprises 380 residues: Cytochrome b (380 aa).

The next 4 helical transmembrane spans lie at 33-53 (FGSLLGLCLITQLLTGLFLAM), 77-98 (WLIRNMHANGASFFFICLYMHI), 113-133 (WNIGVVLFLLVMMTSFVGYVL), and 178-198 (FFAFHFLFPFVVAAFTMLHLL). Heme b contacts are provided by H83 and H97. Heme b contacts are provided by H182 and H196. An a ubiquinone-binding site is contributed by H201. The next 4 helical transmembrane spans lie at 226–246 (YKDLLGFAVMLLGLTALALFA), 288–308 (LGGVLALLFSILVLMVVPFLH), 320–340 (LTQMLFWVLVADMLVLTWIGG), and 347–367 (FIIIGQVASVLYFSLFLVLFP).

The protein belongs to the cytochrome b family. The cytochrome bc1 complex contains 3 respiratory subunits (MT-CYB, CYC1 and UQCRFS1), 2 core proteins (UQCRC1 and UQCRC2) and probably 6 low-molecular weight proteins. It depends on heme b as a cofactor.

The protein resides in the mitochondrion inner membrane. Functionally, component of the ubiquinol-cytochrome c reductase complex (complex III or cytochrome b-c1 complex) that is part of the mitochondrial respiratory chain. The b-c1 complex mediates electron transfer from ubiquinol to cytochrome c. Contributes to the generation of a proton gradient across the mitochondrial membrane that is then used for ATP synthesis. This Gadus morhua (Atlantic cod) protein is Cytochrome b (mt-cyb).